The primary structure comprises 264 residues: Thymidylate synthase (264 aa).

Arg-21 contacts dUMP. A (6R)-5,10-methylene-5,6,7,8-tetrahydrofolate-binding site is contributed by His-51. 126–127 lines the dUMP pocket; the sequence is RR. Cys-146 serves as the catalytic Nucleophile. DUMP contacts are provided by residues 166-169, Asn-177, and 207-209; these read RSAD and HLY. (6R)-5,10-methylene-5,6,7,8-tetrahydrofolate is bound at residue Asp-169. Ala-263 contributes to the (6R)-5,10-methylene-5,6,7,8-tetrahydrofolate binding site.

This sequence belongs to the thymidylate synthase family. Bacterial-type ThyA subfamily. As to quaternary structure, homodimer.

The protein resides in the cytoplasm. It carries out the reaction dUMP + (6R)-5,10-methylene-5,6,7,8-tetrahydrofolate = 7,8-dihydrofolate + dTMP. Its pathway is pyrimidine metabolism; dTTP biosynthesis. In terms of biological role, catalyzes the reductive methylation of 2'-deoxyuridine-5'-monophosphate (dUMP) to 2'-deoxythymidine-5'-monophosphate (dTMP) while utilizing 5,10-methylenetetrahydrofolate (mTHF) as the methyl donor and reductant in the reaction, yielding dihydrofolate (DHF) as a by-product. This enzymatic reaction provides an intracellular de novo source of dTMP, an essential precursor for DNA biosynthesis. The protein is Thymidylate synthase of Paramagnetospirillum magneticum (strain ATCC 700264 / AMB-1) (Magnetospirillum magneticum).